Consider the following 695-residue polypeptide: Elongation factor G 1 (695 aa).

The tr-type G domain maps to 5-280; that stretch reads ARYRNIGIFA…AVVDYLPSPT (276 aa). GTP contacts are provided by residues 14–21, 78–82, and 132–135; these read AHVDAGKT, DTPGH, and NKLD.

Belongs to the TRAFAC class translation factor GTPase superfamily. Classic translation factor GTPase family. EF-G/EF-2 subfamily.

The protein resides in the cytoplasm. Its function is as follows. Catalyzes the GTP-dependent ribosomal translocation step during translation elongation. During this step, the ribosome changes from the pre-translocational (PRE) to the post-translocational (POST) state as the newly formed A-site-bound peptidyl-tRNA and P-site-bound deacylated tRNA move to the P and E sites, respectively. Catalyzes the coordinated movement of the two tRNA molecules, the mRNA and conformational changes in the ribosome. This chain is Elongation factor G 1, found in Pseudoalteromonas atlantica (strain T6c / ATCC BAA-1087).